A 459-amino-acid chain; its full sequence is Transcriptional coactivator YAP1-A (459 aa).

Residues 1–13 (MEPGSQQQPSAPA) show a composition bias toward low complexity. A disordered region spans residues 1 to 22 (MEPGSQQQPSAPAQQPPPVGHQ). A phosphoserine; by LATS1 and LATS2 mark is found at Ser-30, Ser-80, Ser-98, and Ser-134. Disordered regions lie at residues 65-99 (FKQP…AHSS) and 126-145 (SAPH…PLPP). 2 consecutive WW domains span residues 141–174 (VPLP…DPRK) and 199–232 (GPLP…DPRL). The tract at residues 246–268 (NAPVKAPPALPPPSPQTGVLGSG) is disordered. Positions 250–260 (KAPPALPPPSP) are enriched in pro residues. Residues 261 to 459 (QTGVLGSGGN…LDKESFLTWL (199 aa)) are transactivation domain. A coiled-coil region spans residues 269 to 297 (GNQQMRLQQLQMEKERLRLKHQELLRQVR). The disordered stretch occupies residues 344–363 (GTYHSRDESTESGLSMSSYS). Positions 354 to 363 (ESGLSMSSYS) are enriched in polar residues.

It belongs to the YAP1 family. Interacts with tead1. In terms of processing, phosphorylated by lats1 and lats2; leading to cytoplasmic translocation and inactivation.

The protein resides in the cytoplasm. It localises to the nucleus. Its subcellular location is the cell junction. The protein localises to the tight junction. It is found in the cell membrane. Its function is as follows. Transcriptional regulator which can act both as a coactivator and a corepressor and is the critical downstream regulatory target in the Hippo signaling pathway that plays a pivotal role in organ size control and tumor suppression by restricting proliferation and promoting apoptosis. Plays a key role in tissue tension and 3D tissue shape by regulating cortical actomyosin network formation. Required for expansion of the neural plate and neural plate border zone progenitor pools. Acts as a direct regulator of pax3 expression via interaction with tead1. This is Transcriptional coactivator YAP1-A from Xenopus laevis (African clawed frog).